The chain runs to 780 residues: MKKRFPTLLATLIWTALYSQHTLADLAEQCMLGVPTYDQPLVTGDPNQLPVRINADKTEANYPDNALFTGNVIVQQGNSTLTANQVELTQVQKPGEVIPLRTVTATGDVNYDDPQIKLKGPKGWSNLNTKDTDIDKGKYQMVGRQGRGDADLMKLRDQSRYTILKNGTFTSCLPGDNSWSVVGSEVIHDREEQVVEVWNARFKIGKVPVFYSPYMQLPVGDKRRSGFLIPNAKFTSNNGFEFLLPYYWNIAPNFDATITPHYMERRGLQWQNEFRYLLAPGSGTMALDWLPNDRIYTGPDGTDKNATRWLYYWGHSGVMDQVWRFNINYTRVSDPAYFTDLTSQYGSTTDGYATQIFTAGYANENWNATLSSKQFQVFTAAGNSNAYRAQPQLDMNYYKNDVGPFDMHVYGQAAKFTSVNPTNPEASRFHIEPTVNLPLSNSWGSINTEAKLLATHYQQDIPASFADNASNPKLKDSVNRVLPQFKVDGKVVFDRSMDWATGFTQTLEPRAQYLYVPYRNQDDIYIYDTTLMQSDYSGLFRDRTYSGLDRIASANQVSTGLTSRIYDDARVERFNVSVGQIYYFSRSRTGNTEAIDNSNDTGSLVWAGDTFWRINDQLGLKGGAQYDTRLGSLTLGNAIMEYRRDADRMIQLNYRYASPKYIQAAVPKVYNPDYQQGISQVGTTASWPIADRWAIVGAYYYDTKAKQPASQLVGLQYNTCCWAVNLGYERKITGWNAQGQTSKYDNKIGFNIELRGLSGGHSLGTAQMLNSGILPYQSAF.

The first 24 residues, 1-24, serve as a signal peptide directing secretion; that stretch reads MKKRFPTLLATLIWTALYSQHTLA.

This sequence belongs to the LptD family. Component of the lipopolysaccharide transport and assembly complex. Interacts with LptE and LptA.

The protein resides in the cell outer membrane. In terms of biological role, together with LptE, is involved in the assembly of lipopolysaccharide (LPS) at the surface of the outer membrane. The chain is LPS-assembly protein LptD from Yersinia pseudotuberculosis serotype I (strain IP32953).